The following is a 432-amino-acid chain: UPF0597 protein APL_1605 (432 aa).

Belongs to the UPF0597 family.

The chain is UPF0597 protein APL_1605 from Actinobacillus pleuropneumoniae serotype 5b (strain L20).